Reading from the N-terminus, the 390-residue chain is Succinate--CoA ligase [ADP-forming] subunit beta (390 aa).

In terms of domain architecture, ATP-grasp spans 9-244; that stretch reads KEIFRKYGVP…LDEEEPTEVE (236 aa). Residues K46, 53–55, E99, A102, and E107 contribute to the ATP site; that span reads GRG. Positions 199 and 213 each coordinate Mg(2+). Residues N264 and 321–323 contribute to the substrate site; that span reads GIV.

This sequence belongs to the succinate/malate CoA ligase beta subunit family. Heterotetramer of two alpha and two beta subunits. The cofactor is Mg(2+).

The catalysed reaction is succinate + ATP + CoA = succinyl-CoA + ADP + phosphate. It carries out the reaction GTP + succinate + CoA = succinyl-CoA + GDP + phosphate. It participates in carbohydrate metabolism; tricarboxylic acid cycle; succinate from succinyl-CoA (ligase route): step 1/1. In terms of biological role, succinyl-CoA synthetase functions in the citric acid cycle (TCA), coupling the hydrolysis of succinyl-CoA to the synthesis of either ATP or GTP and thus represents the only step of substrate-level phosphorylation in the TCA. The beta subunit provides nucleotide specificity of the enzyme and binds the substrate succinate, while the binding sites for coenzyme A and phosphate are found in the alpha subunit. The sequence is that of Succinate--CoA ligase [ADP-forming] subunit beta from Nautilia profundicola (strain ATCC BAA-1463 / DSM 18972 / AmH).